A 246-amino-acid polypeptide reads, in one-letter code: Enolase-phosphatase E1 (246 aa).

Mg(2+)-binding residues include aspartate 11 and glutamate 13. Substrate contacts are provided by residues 140–141 and lysine 174; that span reads SS. Aspartate 199 contributes to the Mg(2+) binding site.

Belongs to the HAD-like hydrolase superfamily. MasA/MtnC family. In terms of assembly, monomer. The cofactor is Mg(2+).

The protein localises to the cytoplasm. Its subcellular location is the nucleus. The enzyme catalyses 5-methylsulfanyl-2,3-dioxopentyl phosphate + H2O = 1,2-dihydroxy-5-(methylsulfanyl)pent-1-en-3-one + phosphate. The protein operates within amino-acid biosynthesis; L-methionine biosynthesis via salvage pathway; L-methionine from S-methyl-5-thio-alpha-D-ribose 1-phosphate: step 3/6. It functions in the pathway amino-acid biosynthesis; L-methionine biosynthesis via salvage pathway; L-methionine from S-methyl-5-thio-alpha-D-ribose 1-phosphate: step 4/6. In terms of biological role, bifunctional enzyme that catalyzes the enolization of 2,3-diketo-5-methylthiopentyl-1-phosphate (DK-MTP-1-P) into the intermediate 2-hydroxy-3-keto-5-methylthiopentenyl-1-phosphate (HK-MTPenyl-1-P), which is then dephosphorylated to form the acireductone 1,2-dihydroxy-3-keto-5-methylthiopentene (DHK-MTPene). This Acyrthosiphon pisum (Pea aphid) protein is Enolase-phosphatase E1.